Reading from the N-terminus, the 900-residue chain is E3 ubiquitin-protein ligase BRE1-like 2 (900 aa).

The interval 1–31 (MENQESDEPMQKKPHLLDSVSPNSMARNSSP) is disordered. Residues 20-31 (VSPNSMARNSSP) show a composition bias toward polar residues. Coiled coils occupy residues 63 to 96 (TVLQ…LQLN), 217 to 300 (EDAT…KDAA), 437 to 660 (SRIE…AEME), and 706 to 737 (SEKQ…EQMK). The RING-type zinc-finger motif lies at 848 to 887 (CGVCFDRPKEVVIVKCYHLFCQQCIQRSLEIRHRKCPGCG).

This sequence belongs to the BRE1 family. In terms of assembly, may act as a tetramer consisting of two copies of HUB1 and two copies of HUB2. In terms of tissue distribution, ubiquitously expressed.

It is found in the nucleus. The catalysed reaction is S-ubiquitinyl-[E2 ubiquitin-conjugating enzyme]-L-cysteine + [acceptor protein]-L-lysine = [E2 ubiquitin-conjugating enzyme]-L-cysteine + N(6)-ubiquitinyl-[acceptor protein]-L-lysine.. It participates in protein modification; protein ubiquitination. E3 ubiquitin-protein ligase that monoubiquitinates H2B to form H2BK143ub1. H2BK143ub1 gives a specific tag for epigenetic transcriptional activation and is also prerequisite for H3K4me and maybe H3K79me. It thereby plays a central role in histone code and gene regulation. Forms a ubiquitin ligase complex in cooperation with the E2 enzyme UBC2/RAD6. The polypeptide is E3 ubiquitin-protein ligase BRE1-like 2 (HUB2) (Arabidopsis thaliana (Mouse-ear cress)).